The chain runs to 249 residues: Pyridoxine 5'-phosphate synthase (249 aa).

Asn7 contacts 3-amino-2-oxopropyl phosphate. 9-10 (DH) provides a ligand contact to 1-deoxy-D-xylulose 5-phosphate. Residue Arg18 participates in 3-amino-2-oxopropyl phosphate binding. His43 serves as the catalytic Proton acceptor. 2 residues coordinate 1-deoxy-D-xylulose 5-phosphate: Arg45 and His50. Glu70 acts as the Proton acceptor in catalysis. Thr100 is a binding site for 1-deoxy-D-xylulose 5-phosphate. His190 (proton donor) is an active-site residue. 3-amino-2-oxopropyl phosphate contacts are provided by residues Gly191 and 212–213 (GH).

Belongs to the PNP synthase family. In terms of assembly, homooctamer; tetramer of dimers.

Its subcellular location is the cytoplasm. The catalysed reaction is 3-amino-2-oxopropyl phosphate + 1-deoxy-D-xylulose 5-phosphate = pyridoxine 5'-phosphate + phosphate + 2 H2O + H(+). The protein operates within cofactor biosynthesis; pyridoxine 5'-phosphate biosynthesis; pyridoxine 5'-phosphate from D-erythrose 4-phosphate: step 5/5. Its function is as follows. Catalyzes the complicated ring closure reaction between the two acyclic compounds 1-deoxy-D-xylulose-5-phosphate (DXP) and 3-amino-2-oxopropyl phosphate (1-amino-acetone-3-phosphate or AAP) to form pyridoxine 5'-phosphate (PNP) and inorganic phosphate. The polypeptide is Pyridoxine 5'-phosphate synthase (Synechococcus sp. (strain CC9311)).